Here is a 278-residue protein sequence, read N- to C-terminus: Thiazole synthase (278 aa).

The active-site Schiff-base intermediate with DXP is K109. 1-deoxy-D-xylulose 5-phosphate is bound by residues G170, 197 to 198 (AG), and 219 to 220 (NT).

This sequence belongs to the ThiG family. In terms of assembly, homotetramer. Forms heterodimers with either ThiH or ThiS.

The protein localises to the cytoplasm. It catalyses the reaction [ThiS sulfur-carrier protein]-C-terminal-Gly-aminoethanethioate + 2-iminoacetate + 1-deoxy-D-xylulose 5-phosphate = [ThiS sulfur-carrier protein]-C-terminal Gly-Gly + 2-[(2R,5Z)-2-carboxy-4-methylthiazol-5(2H)-ylidene]ethyl phosphate + 2 H2O + H(+). The protein operates within cofactor biosynthesis; thiamine diphosphate biosynthesis. Catalyzes the rearrangement of 1-deoxy-D-xylulose 5-phosphate (DXP) to produce the thiazole phosphate moiety of thiamine. Sulfur is provided by the thiocarboxylate moiety of the carrier protein ThiS. In vitro, sulfur can be provided by H(2)S. The polypeptide is Thiazole synthase (Cupriavidus taiwanensis (strain DSM 17343 / BCRC 17206 / CCUG 44338 / CIP 107171 / LMG 19424 / R1) (Ralstonia taiwanensis (strain LMG 19424))).